A 419-amino-acid chain; its full sequence is UDP-N-acetylglucosamine 1-carboxyvinyltransferase (419 aa).

22-23 (KN) is a phosphoenolpyruvate binding site. Arg-95 lines the UDP-N-acetyl-alpha-D-glucosamine pocket. The active-site Proton donor is the Cys-119. Cys-119 carries the 2-(S-cysteinyl)pyruvic acid O-phosphothioketal modification. UDP-N-acetyl-alpha-D-glucosamine contacts are provided by residues 164–167 (KVSV), Asp-308, and Ile-330.

Belongs to the EPSP synthase family. MurA subfamily.

The protein localises to the cytoplasm. The catalysed reaction is phosphoenolpyruvate + UDP-N-acetyl-alpha-D-glucosamine = UDP-N-acetyl-3-O-(1-carboxyvinyl)-alpha-D-glucosamine + phosphate. It participates in cell wall biogenesis; peptidoglycan biosynthesis. In terms of biological role, cell wall formation. Adds enolpyruvyl to UDP-N-acetylglucosamine. The polypeptide is UDP-N-acetylglucosamine 1-carboxyvinyltransferase (Rickettsia canadensis (strain McKiel)).